A 144-amino-acid chain; its full sequence is Pleckstrin homology-like domain family A member 2 (144 aa).

The PH domain occupies 18–111 (ILCEGELEKR…AAITMALIDF (94 aa)). Residue serine 140 is modified to Phosphoserine.

The protein belongs to the PHLDA2 family. Specifically expressed at high levels in extraembryonic tissues in the developing conceptus (at protein level). Expressed in placenta and yolc sac. Expressed at low levels in fetal liver and kidney.

Its subcellular location is the cytoplasm. The protein resides in the membrane. Plays a role in regulating placenta growth. May act via its PH domain that competes with other PH domain-containing proteins, thereby preventing their binding to membrane lipids. This chain is Pleckstrin homology-like domain family A member 2 (Phlda2), found in Mus musculus (Mouse).